A 95-amino-acid polypeptide reads, in one-letter code: Small ribosomal subunit protein bS18 (95 aa).

It belongs to the bacterial ribosomal protein bS18 family. In terms of assembly, part of the 30S ribosomal subunit. Forms a tight heterodimer with protein bS6.

Its function is as follows. Binds as a heterodimer with protein bS6 to the central domain of the 16S rRNA, where it helps stabilize the platform of the 30S subunit. In Rickettsia felis (strain ATCC VR-1525 / URRWXCal2) (Rickettsia azadi), this protein is Small ribosomal subunit protein bS18.